The primary structure comprises 315 residues: L-lactate dehydrogenase (315 aa).

Residues Val-14, Asp-35, and Tyr-66 each contribute to the NAD(+) site. Substrate-binding positions include Gln-83, Arg-89, and 121-124; that span reads NPVD. NAD(+) is bound by residues 119–121 and Ser-144; that span reads VAN. Residue 149–152 coordinates substrate; that stretch reads DTAR. Catalysis depends on His-176, which acts as the Proton acceptor. Position 221 is a phosphotyrosine (Tyr-221). Thr-230 contributes to the substrate binding site.

The protein belongs to the LDH/MDH superfamily. LDH family. As to quaternary structure, homotetramer.

It is found in the cytoplasm. It carries out the reaction (S)-lactate + NAD(+) = pyruvate + NADH + H(+). The protein operates within fermentation; pyruvate fermentation to lactate; (S)-lactate from pyruvate: step 1/1. In terms of biological role, catalyzes the conversion of lactate to pyruvate. The protein is L-lactate dehydrogenase of Mesomycoplasma hyopneumoniae (strain 232) (Mycoplasma hyopneumoniae).